Consider the following 275-residue polypeptide: Large ribosomal subunit protein uL2 (275 aa).

Disordered stretches follow at residues 28–54 (APHA…TRHI) and 223–275 (VAMN…RNKK).

It belongs to the universal ribosomal protein uL2 family. Part of the 50S ribosomal subunit. Forms a bridge to the 30S subunit in the 70S ribosome.

In terms of biological role, one of the primary rRNA binding proteins. Required for association of the 30S and 50S subunits to form the 70S ribosome, for tRNA binding and peptide bond formation. It has been suggested to have peptidyltransferase activity; this is somewhat controversial. Makes several contacts with the 16S rRNA in the 70S ribosome. This chain is Large ribosomal subunit protein uL2, found in Saccharophagus degradans (strain 2-40 / ATCC 43961 / DSM 17024).